Consider the following 100-residue polypeptide: UPF0213 protein YhbQ (100 aa).

The GIY-YIG domain maps to 2–77 (TPWFLYLIRT…KQLTKRQKER (76 aa)).

The protein belongs to the UPF0213 family.

This is UPF0213 protein YhbQ from Escherichia fergusonii (strain ATCC 35469 / DSM 13698 / CCUG 18766 / IAM 14443 / JCM 21226 / LMG 7866 / NBRC 102419 / NCTC 12128 / CDC 0568-73).